A 206-amino-acid chain; its full sequence is Small ribosomal subunit protein uS4 (206 aa).

Residues 18-45 are disordered; it reads NIWGRPKSPVNRREYGPGQHGQRRKGKM. The S4 RNA-binding domain maps to 94 to 157; it reads RRLDAVVYRA…KQLASVLEAV (64 aa).

The protein belongs to the universal ribosomal protein uS4 family. As to quaternary structure, part of the 30S ribosomal subunit. Contacts protein S5. The interaction surface between S4 and S5 is involved in control of translational fidelity.

One of the primary rRNA binding proteins, it binds directly to 16S rRNA where it nucleates assembly of the body of the 30S subunit. Its function is as follows. With S5 and S12 plays an important role in translational accuracy. The sequence is that of Small ribosomal subunit protein uS4 from Ruegeria pomeroyi (strain ATCC 700808 / DSM 15171 / DSS-3) (Silicibacter pomeroyi).